Reading from the N-terminus, the 504-residue chain is Sodium-coupled neutral amino acid transporter 3 (504 aa).

N-linked (GlcNAc...) asparagine glycosylation is present at N74. The next 5 helical transmembrane spans lie at 83–103, 106–126, 144–164, 187–207, and 213–233; these read GILG…LFLL, VALL…VVGI, AAAL…LYII, MNGN…LALM, and LGYS…AVIY. Cysteines 240 and 275 form a disulfide. 4 N-linked (GlcNAc...) asparagine glycosylation sites follow: N247, N248, N252, and N323. 5 consecutive transmembrane segments (helical) span residues 324–344, 366–386, 408–428, 431–451, and 471–491; these read LSIA…YLTF, ILCV…IVLF, VLIA…APNI, IFGV…PAIF, and ALCF…FIII.

It belongs to the amino acid/polyamine transporter 2 family.

The protein resides in the cell membrane. Its subcellular location is the basolateral cell membrane. It catalyses the reaction L-glutamine(out) + Na(+)(out) + H(+)(in) = L-glutamine(in) + Na(+)(in) + H(+)(out). The catalysed reaction is L-asparagine(out) + Na(+)(out) + H(+)(in) = L-asparagine(in) + Na(+)(in) + H(+)(out). The enzyme catalyses L-histidine(out) + Na(+)(out) + H(+)(in) = L-histidine(in) + Na(+)(in) + H(+)(out). Functionally, symporter that cotransports specific neutral amino acids and sodium ions, coupled to an H(+) antiporter activity. Mainly participates in the glutamate-GABA-glutamine cycle in brain where it transports L-glutamine from astrocytes in the intercellular space for the replenishment of both neurotransmitters glutamate and gamma-aminobutyric acid (GABA) in neurons and also functions as the major influx transporter in ganglion cells mediating the uptake of glutamine. The transport activity is specific for L-glutamine, L-histidine and L-asparagine. The transport is electroneutral coupled to the cotransport of 1 Na(+) and the antiport of 1 H(+). The transport is pH dependent, saturable, Li(+) tolerant and functions in both direction depending on the concentration gradients of its substrates and cotransported ions. Also mediates an amino acid-gated H(+) conductance that is not stoichiometrically coupled to the amino acid transport but which influences the ionic gradients that drive the amino acid transport. In addition, may play a role in nitrogen metabolism, amino acid homeostasis, glucose metabolism and renal ammoniagenesis. This Homo sapiens (Human) protein is Sodium-coupled neutral amino acid transporter 3.